A 940-amino-acid chain; its full sequence is Receptor-like protein 9b (940 aa).

The first 28 residues, 1–28 (MLMMFSPAFVMVMDLMVLVMMIMMMVSS), serve as a signal peptide directing secretion. The Extracellular segment spans residues 29–895 (LDAHGHISCI…GDEETTIDME (867 aa)). N-linked (GlcNAc...) asparagine glycans are attached at residues Asn53, Asn63, Asn66, Asn101, Asn115, and Asn151. 16 LRR repeats span residues 108–136 (FGELQTLNLSNFWCQGWFDHIHGYKSFER), 137–163 (LKNLEILDISENGVNNTVLPFINTASS), 165–185 (KTLILHGNNMEGTFPMKELIN), 186–211 (LRNLELLDLSKNQFVGPVPDLANFHN), 213–232 (QGLDMSDNKFSGSNKGLCQL), 233–255 (KNLRELDLSQNKFTGQFPQCFDS), 257–279 (TQLQVLDISSNNFNGTVPSLIRN), 281–304 (DSVEYLALSDNEFKGFFSLELIAN), 306–330 (SKLKVFKLSSRSNLLRLKKLSSLQP), 331–354 (KFQLSVIELQNCNLENVPSFIQHQ), 355–378 (KDLHVINLSNNKLTGVFPYWLLEK), 379–402 (YPNLRVLLLQNNSLTMLELPRLLN), 403–426 (HTLQILDLSANNFDQRLPENIGKV), 427–450 (LPNIRHLNLSNNGFQWILPSSFGE), 452–475 (KDIKFLDLSHNNFSGSLPMKFLIG), and 477–502 (SSLHTLKLSYNKFFGQIFPKQTNFGS). N-linked (GlcNAc...) asparagine glycans are attached at residues Asn270 and Asn304. Asn361, Asn389, and Asn402 each carry an N-linked (GlcNAc...) asparagine glycan. Asn434 and Asn463 each carry an N-linked (GlcNAc...) asparagine glycan. One copy of the LRR 17; degenerate repeat lies at 503 to 522 (LVVLIANNNLFTGIADGLRN). 11 LRR repeats span residues 523–546 (VQSLGVLDLSNNYLQGVIPSWFGG), 547–570 (FFFAYLFLSNNLLEGTLPSTLFSK), 571–593 (PTFKILDLSGNKFSGNLPSHFTG), 595–615 (DMSLLYLNDNEFSGTIPSTLI), 616–639 (KDVLVLDLRNNKLSGTIPHFVKNE), 641–662 (ILSLLLRGNTLTGHIPTDLCGL), 663–686 (RSIRILDLANNRLKGSIPTCLNNV), 752–776 (FNFMFGLDLSSNELSGDIPKELGDL), 777–799 (QRIRALNLSHNSLSGLIPQSFSN), 801–824 (TDIESIDLSFNLLRGPIPQDLSKL), and 826–849 (YMVVFNVSYNNLSGSIPSHGKFST). N-linked (GlcNAc...) asparagine glycosylation is present at Asn685. Asn783 and Asn799 each carry an N-linked (GlcNAc...) asparagine glycan. Residues Asn831, Asn836, Asn867, and Asn873 are each glycosylated (N-linked (GlcNAc...) asparagine). The chain crosses the membrane as a helical span at residues 896 to 916 (IFYWSLAATYGVTWITFIVFL). The Cytoplasmic portion of the chain corresponds to 917–940 (CFDSPWRRVWFHFVDAFISLFKCV).

This sequence belongs to the RLP family.

It localises to the cell membrane. The polypeptide is Receptor-like protein 9b (Arabidopsis thaliana (Mouse-ear cress)).